The chain runs to 38 residues: Mu-agatoxin-Hc1c (38 aa).

Disulfide bonds link Cys3-Cys19, Cys10-Cys24, Cys18-Cys34, and Cys26-Cys32. Ser38 carries the serine amide modification.

It belongs to the neurotoxin 07 (Beta/delta-agtx) family. 02 (aga-3) subfamily. As to expression, expressed by the venom gland.

It is found in the secreted. In terms of biological role, insecticidal neurotoxin that induces irreversible neuromuscular blockade in house crickets (A.domesticus). Modifies presynaptic voltage-gated sodium channels (Nav), causing them to open at the normal resting potential of the nerve. This leads to spontaneous release of neurotransmitter and repetitive action potentials in motor neurons. In Hololena curta (Funnel-web spider), this protein is Mu-agatoxin-Hc1c.